The chain runs to 597 residues: Elongation factor 4 (597 aa).

The tr-type G domain occupies 2–184 (QHIRNFSIIA…SIVARVPPPK (183 aa)). Residues 14 to 19 (DHGKST) and 131 to 134 (NKMD) each bind GTP.

Belongs to the TRAFAC class translation factor GTPase superfamily. Classic translation factor GTPase family. LepA subfamily.

The protein resides in the cell inner membrane. It catalyses the reaction GTP + H2O = GDP + phosphate + H(+). In terms of biological role, required for accurate and efficient protein synthesis under certain stress conditions. May act as a fidelity factor of the translation reaction, by catalyzing a one-codon backward translocation of tRNAs on improperly translocated ribosomes. Back-translocation proceeds from a post-translocation (POST) complex to a pre-translocation (PRE) complex, thus giving elongation factor G a second chance to translocate the tRNAs correctly. Binds to ribosomes in a GTP-dependent manner. The protein is Elongation factor 4 of Bordetella bronchiseptica (strain ATCC BAA-588 / NCTC 13252 / RB50) (Alcaligenes bronchisepticus).